A 345-amino-acid chain; its full sequence is Adenine deaminase (345 aa).

Zn(2+) is bound by residues H20, H22, and H204. E207 serves as the catalytic Proton donor. Residue D285 participates in Zn(2+) binding. Position 286 (D286) interacts with substrate.

The protein belongs to the metallo-dependent hydrolases superfamily. Adenosine and AMP deaminases family. Adenine deaminase type 2 subfamily. Zn(2+) is required as a cofactor.

The catalysed reaction is adenine + H2O + H(+) = hypoxanthine + NH4(+). In terms of biological role, catalyzes the hydrolytic deamination of adenine to hypoxanthine. Plays an important role in the purine salvage pathway and in nitrogen catabolism. In Ralstonia pickettii (strain 12J), this protein is Adenine deaminase.